A 256-amino-acid polypeptide reads, in one-letter code: 6-carboxyhexanoate--CoA ligase (256 aa).

It belongs to the BioW family. Homodimer. The cofactor is Mg(2+).

The enzyme catalyses heptanedioate + ATP + CoA = 6-carboxyhexanoyl-CoA + AMP + diphosphate. It functions in the pathway metabolic intermediate metabolism; pimeloyl-CoA biosynthesis; pimeloyl-CoA from pimelate: step 1/1. Catalyzes the transformation of pimelate into pimeloyl-CoA with concomitant hydrolysis of ATP to AMP. In Bacillus velezensis (strain DSM 23117 / BGSC 10A6 / LMG 26770 / FZB42) (Bacillus amyloliquefaciens subsp. plantarum), this protein is 6-carboxyhexanoate--CoA ligase.